A 71-amino-acid chain; its full sequence is NAD(P)H-quinone oxidoreductase subunit O (71 aa).

Belongs to the complex I NdhO subunit family. As to quaternary structure, NDH-1 can be composed of about 15 different subunits; different subcomplexes with different compositions have been identified which probably have different functions.

It is found in the cellular thylakoid membrane. It carries out the reaction a plastoquinone + NADH + (n+1) H(+)(in) = a plastoquinol + NAD(+) + n H(+)(out). It catalyses the reaction a plastoquinone + NADPH + (n+1) H(+)(in) = a plastoquinol + NADP(+) + n H(+)(out). Functionally, NDH-1 shuttles electrons from an unknown electron donor, via FMN and iron-sulfur (Fe-S) centers, to quinones in the respiratory and/or the photosynthetic chain. The immediate electron acceptor for the enzyme in this species is believed to be plastoquinone. Couples the redox reaction to proton translocation, and thus conserves the redox energy in a proton gradient. Cyanobacterial NDH-1 also plays a role in inorganic carbon-concentration. The polypeptide is NAD(P)H-quinone oxidoreductase subunit O (Nostoc punctiforme (strain ATCC 29133 / PCC 73102)).